A 668-amino-acid chain; its full sequence is Golgin candidate 2 (668 aa).

A disordered region spans residues 22–317 (QAADSLRKDE…RQREERRRRR (296 aa)). A compositionally biased stretch (basic and acidic residues) spans 26-39 (SLRKDEKSETHDEV). Polar residues-rich tracts occupy residues 64-86 (GSDS…LSSS) and 100-113 (SAPS…NTKL). Composition is skewed to low complexity over residues 123 to 141 (STPN…GGTS) and 168 to 178 (SSSSNVVNSRG). Basic and acidic residues-rich tracts occupy residues 184–207 (TNKE…RNAP), 215–237 (THKE…RRSA), and 250–259 (GKRDGRESRR). Residues 290–302 (DESESDYESDSST) are compositionally biased toward acidic residues. The span at 303-312 (DSERERQREE) shows a compositional bias: basic and acidic residues. Residues 331-539 (AVIKERENMV…SQVEALSSEK (209 aa)) are a coiled coil. A run of 2 helical transmembrane segments spans residues 594 to 614 (KHLG…TVFL) and 622 to 642 (IWAV…LLSH).

The protein resides in the golgi apparatus membrane. Golgi matrix protein playing a role in tethering of vesicles to Golgi membranes and in maintaining the overall structure of the Golgi apparatus. The chain is Golgin candidate 2 (GC2) from Arabidopsis thaliana (Mouse-ear cress).